Consider the following 608-residue polypeptide: MDNLSDTLKKLKITAVDRTDDSLEGCLDCLLQALTQNNMETSEKIQGSGILQVFASLLIPQSSCTAKVANVIAEIAKNEFMRIPCVDAGLISPLVQLLNSKDQEVLLQTGRALGNICYDSHEGRSAVDQAGGAQIVVDHLRSLCSKTDPASEKLLTVFCGMLMNYSNEKNDSLQAQLINMGVIPTLVKLLGIHCQKAALTEMCLVAFGNLAELESSKEQFASTNIAEELVKLFKKQIEHDKREMVFEVLAPLAENDAIKLQLVESGLVECLLEIVQQKVDSDKEEDIAELKTASDLMVLLLLGDESMQKLFEGGKGNVFQRVLSWIPSNNHQLQLAGALAIANFARNDGNCIHMVDNGIVEKLMDLLDRHVEDGNVTVQHAALSCLRNLAIPVVNKAKMLSAGVTEAVLKFLKSEMPPVQFKLLGTLRMLIDAQAEAAEQLGKNVKLVERLVEWCEAKDHAGVMGESNRLLSALIRHSKSKDVIKTIVQSGGIKHLVTMATSEHVIMQNEALVALALIAALELGTAEKDLESAQLVQILHRLLADERSAPEIKYNSMVLICALMGSESLHKEVQDLAFLDVVSKLRSHENKSVAQQASLTEQRLAVES.

ARM repeat units lie at residues 89–131 (GLIS…DQAG) and 171–212 (DSLQ…NLAE). The interval 122 to 171 (EGRSAVDQAGGAQIVVDHLRSLCSKTDPASEKLLTVFCGMLMNYSNEKND) is prevents binding to prenylated RHOA. At Lys231 the chain carries N6-acetyllysine. 3 ARM repeats span residues 348–391 (DGNC…NLAI), 392–432 (PVVN…MLID), and 480–520 (SKDV…LIAA).

In terms of assembly, interacts with RABL3. Interacts with RHOT1. As to quaternary structure, interacts with unprenylated RHOA; the interaction is direct. Interacts with RAP1A. Interacts with KRAS. Interacts with RAC1. Interacts with RAP1B. Preferentially interacts with unprenylated GTPases that will become geranylgeranylated. May also interact with prenylated GTPases. Interacts with prenylated RHOA; the interaction is direct and in a 1:1 stoichiometry. Interacts with RAP1A. Interacts with KRAS. Interacts with RAC1. Interacts with RAP1B. Preferentially interacts with prenylated GTPases. In terms of processing, the N-terminus is blocked. Forms covalent cross-links mediated by transglutaminase TGM2, between a glutamine and the epsilon-amino group of a lysine residue, forming homopolymers and heteropolymers. Brain.

It localises to the cytoplasm. The protein localises to the cytosol. It is found in the endoplasmic reticulum. The protein resides in the mitochondrion. Its subcellular location is the nucleus. Functionally, acts as a GEF (guanine nucleotide exchange factor) for the Rho family of small GTP-binding proteins (G proteins) that stimulates the dissociation of GDP to enable subsequent binding of GTP. Additionally, appears to chaperone the processing and/or trafficking of small GTPases containing a C-terminal polybasic region independently of GEF activity. Targets include RAP1A/RAP1B, RHOA, RHOB, RHOC, RAC1 and KRAS. Regulates mitochondrial dynamics by controlling RHOT function to promote mitochondrial fission during high calcium conditions. Able to promote the Ca(2+) release from the endoplasmic reticulum via both inositol trisphosphate (Ins3P) and ryanodine sensitive receptors leading to a enhanced mitochondrial Ca(2+) uptake. Acts as a GEF (guanine nucleotide exchange factor) for unprenylated RHOA. Chaperones the entry and passage of small GTPases through the prenylation pathway. Recognizes the last amino acid in the GTPase C-terminal CAAX motif with a preference for 'Leu' over 'Met', indicating involvement in the geranylgeranylation pathway. May also recognize prenylated GTPases. Its function is as follows. Acts as a GEF (guanine nucleotide exchange factor) for prenylated RHOA. Acts as a GEF for RHOC. Chaperones the downstream trafficking and/or processing of small newly prenylated GTPases. Escorts RAC1 to the nucleus. The protein is Rap1 GTPase-GDP dissociation stimulator 1 (RAP1GDS1) of Bos taurus (Bovine).